Consider the following 126-residue polypeptide: Large ribosomal subunit protein uL22 (126 aa).

It belongs to the universal ribosomal protein uL22 family. In terms of assembly, part of the 50S ribosomal subunit.

This protein binds specifically to 23S rRNA; its binding is stimulated by other ribosomal proteins, e.g. L4, L17, and L20. It is important during the early stages of 50S assembly. It makes multiple contacts with different domains of the 23S rRNA in the assembled 50S subunit and ribosome. Its function is as follows. The globular domain of the protein is located near the polypeptide exit tunnel on the outside of the subunit, while an extended beta-hairpin is found that lines the wall of the exit tunnel in the center of the 70S ribosome. The polypeptide is Large ribosomal subunit protein uL22 (Maricaulis maris (strain MCS10) (Caulobacter maris)).